A 535-amino-acid chain; its full sequence is CTP synthase (535 aa).

An amidoligase domain region spans residues 1–267; sequence MTKYIFVTGG…DQIVCDHLKL (267 aa). Serine 13 is a binding site for CTP. UTP is bound at residue serine 13. 14 to 19 is an ATP binding site; that stretch reads SLGKGI. Residue tyrosine 54 coordinates L-glutamine. ATP is bound at residue aspartate 71. Mg(2+)-binding residues include aspartate 71 and glutamate 141. Residues 148 to 150, 188 to 193, and lysine 224 contribute to the CTP site; these read DIE and KTKPTQ. UTP is bound by residues 188 to 193 and lysine 224; that span reads KTKPTQ. Position 240–242 (240–242) interacts with ATP; it reads RDA. The region spanning 292–534 is the Glutamine amidotransferase type-1 domain; sequence KIALVGKYVE…VRASITNKES (243 aa). An L-glutamine-binding site is contributed by glycine 354. Cysteine 381 acts as the Nucleophile; for glutamine hydrolysis in catalysis. Residues 382–385, glutamate 405, and arginine 462 contribute to the L-glutamine site; that span reads LGMQ. Active-site residues include histidine 507 and glutamate 509.

Belongs to the CTP synthase family. In terms of assembly, homotetramer.

The enzyme catalyses UTP + L-glutamine + ATP + H2O = CTP + L-glutamate + ADP + phosphate + 2 H(+). It catalyses the reaction L-glutamine + H2O = L-glutamate + NH4(+). It carries out the reaction UTP + NH4(+) + ATP = CTP + ADP + phosphate + 2 H(+). It participates in pyrimidine metabolism; CTP biosynthesis via de novo pathway; CTP from UDP: step 2/2. Its activity is regulated as follows. Allosterically activated by GTP, when glutamine is the substrate; GTP has no effect on the reaction when ammonia is the substrate. The allosteric effector GTP functions by stabilizing the protein conformation that binds the tetrahedral intermediate(s) formed during glutamine hydrolysis. Inhibited by the product CTP, via allosteric rather than competitive inhibition. In terms of biological role, catalyzes the ATP-dependent amination of UTP to CTP with either L-glutamine or ammonia as the source of nitrogen. Regulates intracellular CTP levels through interactions with the four ribonucleotide triphosphates. This is CTP synthase from Bacillus cereus (strain G9842).